A 389-amino-acid polypeptide reads, in one-letter code: Protein WALLS ARE THIN 1 (389 aa).

A run of 10 helical transmembrane segments spans residues 18 to 38 (LQLH…HVVS), 49 to 69 (LVFP…FAYF), 76 to 96 (PAIT…GITA), 111 to 131 (TFAS…AALL), 143 to 163 (GISK…ITLY), 198 to 218 (WTLG…WLVF), 230 to 250 (LSVT…IAAF), 266 to 286 (LFTI…VQIW), 294 to 314 (VFVA…ASIA), and 319 to 339 (FYLG…FVLY). EamA domains lie at 32-161 (AGFH…SVIT) and 210-339 (LSWS…FVLY). Phosphoserine is present on Ser-372.

It belongs to the drug/metabolite transporter (DMT) superfamily. Plant drug/metabolite exporter (P-DME) (TC 2.A.7.4) family. As to expression, mostly expressed in stems and hypocotyls, also present in seedlings, root, leaves, flowers and siliques. Ubiquitous, mostly expressed in vascular tissues and secondary wall-forming cells, including developing xylem vessels and fibers.

It is found in the vacuole membrane. Required for secondary wall formation in fibers, especially in short days conditions. Promotes indole metabolism and transport (e.g. tryptophan, neoglucobrassicin and auxin (indole-3-acetic acid)). May prevent salicylic-acid (SA) accumulation. This chain is Protein WALLS ARE THIN 1 (WAT1), found in Arabidopsis thaliana (Mouse-ear cress).